The sequence spans 184 residues: UPF0149 protein PSPTO_5224 (184 aa).

It belongs to the UPF0149 family.

This chain is UPF0149 protein PSPTO_5224, found in Pseudomonas syringae pv. tomato (strain ATCC BAA-871 / DC3000).